The primary structure comprises 255 residues: Probable transcriptional regulatory protein Rcas_0718 (255 aa).

The protein belongs to the TACO1 family.

It is found in the cytoplasm. This Roseiflexus castenholzii (strain DSM 13941 / HLO8) protein is Probable transcriptional regulatory protein Rcas_0718.